A 95-amino-acid polypeptide reads, in one-letter code: CRISPR-associated endoribonuclease Cas2 3 (95 aa).

Aspartate 7 provides a ligand contact to Mg(2+).

Belongs to the CRISPR-associated endoribonuclease Cas2 protein family. As to quaternary structure, homodimer, forms a heterotetramer with a Cas1 homodimer. Requires Mg(2+) as cofactor.

Functionally, CRISPR (clustered regularly interspaced short palindromic repeat), is an adaptive immune system that provides protection against mobile genetic elements (viruses, transposable elements and conjugative plasmids). CRISPR clusters contain sequences complementary to antecedent mobile elements and target invading nucleic acids. CRISPR clusters are transcribed and processed into CRISPR RNA (crRNA). Functions as a ssRNA-specific endoribonuclease. Involved in the integration of spacer DNA into the CRISPR cassette. In Rhodospirillum rubrum (strain ATCC 11170 / ATH 1.1.1 / DSM 467 / LMG 4362 / NCIMB 8255 / S1), this protein is CRISPR-associated endoribonuclease Cas2 3.